Reading from the N-terminus, the 113-residue chain is Hydrogenase maturation factor HypA (113 aa).

Ni(2+) is bound at residue H2. Residues C73, C76, C89, and C92 each coordinate Zn(2+).

The protein belongs to the HypA/HybF family.

Involved in the maturation of [NiFe] hydrogenases. Required for nickel insertion into the metal center of the hydrogenase. This Azotobacter chroococcum mcd 1 protein is Hydrogenase maturation factor HypA.